Reading from the N-terminus, the 529-residue chain is Probable biotin-dependent acyl-coenzyme A carboxylase beta2 subunit (529 aa).

The CoA carboxyltransferase N-terminal domain maps to 20-271; sequence MSGKLDEINA…IKQGPAPAPV (252 aa). The CoA carboxyltransferase C-terminal domain occupies 270 to 520; the sequence is PVTEPLFDAE…SAIANGPIKG (251 aa).

This sequence belongs to the AccD/PCCB family. The biotin-dependent acyl-CoA carboxylase complex is composed of an AccA protein, which contains the biotin carboxylase (BC) and biotin carboxyl carrier protein (BCCP) domains, and an AccD protein, which contains the carboxyl transferase (CT) domain.

Functionally, component of a biotin-dependent acyl-CoA carboxylase complex. This subunit transfers the CO2 from carboxybiotin to the CoA ester substrate. This is Probable biotin-dependent acyl-coenzyme A carboxylase beta2 subunit (accD2) from Mycobacterium tuberculosis (strain ATCC 25618 / H37Rv).